Reading from the N-terminus, the 229-residue chain is UPF0441 protein YE3666 (229 aa).

Disordered stretches follow at residues 101–125 and 190–229; these read PAQA…QQSG and KPAV…SMGG. Composition is skewed to low complexity over residues 109–120 and 214–229; these read TSSSSSETTAAA and RSAA…SMGG.

This sequence belongs to the UPF0441 family.

The polypeptide is UPF0441 protein YE3666 (Yersinia enterocolitica serotype O:8 / biotype 1B (strain NCTC 13174 / 8081)).